Reading from the N-terminus, the 106-residue chain is Glutaredoxin-1 (106 aa).

Ala-2 is subject to N-acetylalanine. The 104-residue stretch at 3–106 folds into the Glutaredoxin domain; that stretch reads QEFVNCKIQP…TRLKQIGALQ (104 aa). An N6-succinyllysine modification is found at Lys-9. Cystine bridges form between Cys-23–Cys-26 and Cys-79–Cys-83.

Belongs to the glutaredoxin family.

The protein resides in the cytoplasm. In terms of biological role, has a glutathione-disulfide oxidoreductase activity in the presence of NADPH and glutathione reductase. Reduces low molecular weight disulfides and proteins. The protein is Glutaredoxin-1 (GLRX) of Homo sapiens (Human).